A 203-amino-acid chain; its full sequence is ATP synthase subunit delta, chloroplastic (203 aa).

Belongs to the ATPase delta chain family. In terms of assembly, F-type ATPases have 2 components, F(1) - the catalytic core - and F(0) - the membrane proton channel. F(1) has five subunits: alpha(3), beta(3), gamma(1), delta(1), epsilon(1). CF(0) has four main subunits: a(1), b(1), b'(1) and c(10-14). The alpha and beta chains form an alternating ring which encloses part of the gamma chain. F(1) is attached to F(0) by a central stalk formed by the gamma and epsilon chains, while a peripheral stalk is formed by the delta, b and b' chains.

The protein localises to the plastid. Its subcellular location is the chloroplast thylakoid membrane. In terms of biological role, f(1)F(0) ATP synthase produces ATP from ADP in the presence of a proton or sodium gradient. F-type ATPases consist of two structural domains, F(1) containing the extramembraneous catalytic core and F(0) containing the membrane proton channel, linked together by a central stalk and a peripheral stalk. During catalysis, ATP synthesis in the catalytic domain of F(1) is coupled via a rotary mechanism of the central stalk subunits to proton translocation. Its function is as follows. This protein is part of the stalk that links CF(0) to CF(1). It either transmits conformational changes from CF(0) to CF(1) or is implicated in proton conduction. This chain is ATP synthase subunit delta, chloroplastic, found in Heterosigma akashiwo (strain NIES-293 / 8280G21-1).